A 378-amino-acid polypeptide reads, in one-letter code: UDP-N-acetylglucosamine--N-acetylmuramyl-(pentapeptide) pyrophosphoryl-undecaprenol N-acetylglucosamine transferase (378 aa).

Residues 24 to 26, Asn144, Arg181, Ser215, and Gln310 each bind UDP-N-acetyl-alpha-D-glucosamine; that span reads TAG.

This sequence belongs to the glycosyltransferase 28 family. MurG subfamily.

Its subcellular location is the cell membrane. It carries out the reaction di-trans,octa-cis-undecaprenyl diphospho-N-acetyl-alpha-D-muramoyl-L-alanyl-D-glutamyl-meso-2,6-diaminopimeloyl-D-alanyl-D-alanine + UDP-N-acetyl-alpha-D-glucosamine = di-trans,octa-cis-undecaprenyl diphospho-[N-acetyl-alpha-D-glucosaminyl-(1-&gt;4)]-N-acetyl-alpha-D-muramoyl-L-alanyl-D-glutamyl-meso-2,6-diaminopimeloyl-D-alanyl-D-alanine + UDP + H(+). The protein operates within cell wall biogenesis; peptidoglycan biosynthesis. Functionally, cell wall formation. Catalyzes the transfer of a GlcNAc subunit on undecaprenyl-pyrophosphoryl-MurNAc-pentapeptide (lipid intermediate I) to form undecaprenyl-pyrophosphoryl-MurNAc-(pentapeptide)GlcNAc (lipid intermediate II). The protein is UDP-N-acetylglucosamine--N-acetylmuramyl-(pentapeptide) pyrophosphoryl-undecaprenol N-acetylglucosamine transferase of Nocardia farcinica (strain IFM 10152).